The chain runs to 1511 residues: DNA-directed RNA polymerase subunit beta' (1511 aa).

Zn(2+) contacts are provided by C75, C77, C90, and C93. The Mg(2+) site is built by D474, D476, and D478. C804, C878, C885, and C888 together coordinate Zn(2+).

This sequence belongs to the RNA polymerase beta' chain family. The RNAP catalytic core consists of 2 alpha, 1 beta, 1 beta' and 1 omega subunit. When a sigma factor is associated with the core the holoenzyme is formed, which can initiate transcription. The cofactor is Mg(2+). It depends on Zn(2+) as a cofactor.

The enzyme catalyses RNA(n) + a ribonucleoside 5'-triphosphate = RNA(n+1) + diphosphate. Its function is as follows. DNA-dependent RNA polymerase catalyzes the transcription of DNA into RNA using the four ribonucleoside triphosphates as substrates. This is DNA-directed RNA polymerase subunit beta' from Aliarcobacter butzleri (strain RM4018) (Arcobacter butzleri).